The following is a 613-amino-acid chain: Oxidoreductase GME11365 (613 aa).

Plastocyanin-like domains are found at residues 72-188 (ISEA…HGPS), 198-331 (PLLI…WIHG), and 431-571 (VDWR…EQPS).

The protein belongs to the multicopper oxidase family.

Its pathway is secondary metabolite biosynthesis. Functionally, oxidoreductase; part of the gene cluster that mediates the biosynthesis of dibenzodioxocinones such as pestalotiollide B, a novel class of inhibitors against cholesterol ester transfer protein (CEPT). The biosynthesis initiates from condensation of acetate and malonate units catalyzed by the non-reducing PKS pks8/GME11356. Pks8/GME11356 lacks a thioesterase (TE) domain, which is important to the cyclizing of the third ring of atrochrysone carboxylic acid, and the esterase GME11355 might play the role of TE and catalyzes the cyclization reaction of the C ring. The lactamase-like protein GME11357 (or other beta-lactamases in Pestalotiopsis microspora) probably hydrolyzes the thioester bond between the ACP of pks8/GME11356 and the intermediate to release atrochrysone carboxylic acid, which is spontaneously dehydrates to form endocrocin anthrone. Endocrocin anthrone is further converted to emodin via the endocrocin intermediate. Emodin is then oxidized by several enzymes such as the Baeyer-Villiger oxidase GME11358, the oxidoreductase GME11367, the short chain dehydrogenase/reductase GME11373, as well as by other oxidoreductases from the cluster, to modify the A and C rings and open the B ring, and finally yield monodictyphenone. The prenyltransferase GME11375 may catalyze the addition reaction between the C5 side chains and the carbon bone of dibenzodioxocinones. The remaining biochemical reactions to the final product dibenzodioxocinones should be methylation catalyzed by methyltransferase GME11366 and reduction and lactonization reaction catalyzed by a series of oxidordeuctases. The protein is Oxidoreductase GME11365 of Pestalotiopsis microspora.